The following is a 280-amino-acid chain: BURP domain protein USPL1 (280 aa).

The N-terminal stretch at 1 to 24 (MASTFRLSISFLTLILFSLWVVEA) is a signal peptide. A BURP domain is found at 58 to 280 (YFTLNDLKLG…PLDNIVWVTK (223 aa)).

Expressed in cotyledons, radicle, floral buds, open flowers, roots and developing seeds, but not in leaves. Highly expressed in the root tips. Detected in young leaves, hypocotyls, stems and mature seed funiculum.

Its subcellular location is the protein storage vacuole. The protein localises to the golgi apparatus. It localises to the golgi stack. The protein resides in the trans-Golgi network. It is found in the prevacuolar compartment. In terms of biological role, associated with the protein storage vacuole formation. This chain is BURP domain protein USPL1, found in Arabidopsis thaliana (Mouse-ear cress).